The chain runs to 327 residues: Phenylalanine--tRNA ligase alpha subunit (327 aa).

E252 serves as a coordination point for Mg(2+).

The protein belongs to the class-II aminoacyl-tRNA synthetase family. Phe-tRNA synthetase alpha subunit type 1 subfamily. As to quaternary structure, tetramer of two alpha and two beta subunits. Mg(2+) is required as a cofactor.

The protein localises to the cytoplasm. It catalyses the reaction tRNA(Phe) + L-phenylalanine + ATP = L-phenylalanyl-tRNA(Phe) + AMP + diphosphate + H(+). In Shewanella baltica (strain OS185), this protein is Phenylalanine--tRNA ligase alpha subunit.